Consider the following 239-residue polypeptide: Norbelladine 4'-O-methyltransferase (239 aa).

S-adenosyl-L-methionine is bound by residues valine 55, glutamate 77, 79 to 80, serine 85, aspartate 103, and alanine 132; that span reads GV. Aspartate 155 is a binding site for a divalent metal cation. Aspartate 157 contacts S-adenosyl-L-methionine. Residues aspartate 181 and asparagine 182 each coordinate a divalent metal cation.

The protein belongs to the class I-like SAM-binding methyltransferase superfamily. Cation-dependent O-methyltransferase family. The cofactor is Mg(2+). As to expression, mostly expressed in bulbs, and, to a lower extent, in stems and roots.

It catalyses the reaction norbelladine + S-adenosyl-L-methionine = 4'-O-methylnorbelladine + S-adenosyl-L-homocysteine + H(+). The protein operates within alkaloid biosynthesis. Its function is as follows. 4'-O-methyltransferase converting norbelladine to 4'-O-methylnorbelladine. 4'-O-methylnorbelladine is a precursor to all Amaryllidaceae alkaloids such as galanthamine, lycorine and haemanthamine, and including haemanthamine- and crinamine-type alkaloids, promising anticancer agents. This is Norbelladine 4'-O-methyltransferase from Narcissus pseudonarcissus (Daffodil).